The chain runs to 185 residues: UPF0397 protein LJ_1703 (185 aa).

A run of 5 helical transmembrane segments spans residues 6-26, 46-66, 78-98, 113-133, and 147-167; these read GLSVKSVVAIGIGAAIYVILA, FLALLATIYGPVVGFSVGFIG, TWWSWVLATAVLGLIIGLYGM, IGFNIVQIIANVVSWLIIAPV, and FLQGATATITNSISILILGTI.

Belongs to the UPF0397 family.

The protein resides in the cell membrane. The polypeptide is UPF0397 protein LJ_1703 (Lactobacillus johnsonii (strain CNCM I-12250 / La1 / NCC 533)).